The sequence spans 219 residues: Pollen-specific protein SF3 (219 aa).

2 LIM zinc-binding domains span residues 9 to 109 (QKCT…TRDK) and 110 to 167 (CNAC…QLFK). Residues 181–219 (VAAPAESETQNTETQNAETQNADTQNADTQNTETQNGSV) form a disordered region. Over residues 185-202 (AESETQNTETQNAETQNA) the composition is skewed to low complexity. The span at 203 to 219 (DTQNADTQNTETQNGSV) shows a compositional bias: polar residues.

Pollen.

Its function is as follows. Could possibly involved in controlling pollen-specific processes such as male gamete maturation, pollen tube formation, or even fertilization. This chain is Pollen-specific protein SF3 (SF3), found in Helianthus annuus (Common sunflower).